The chain runs to 425 residues: Serine--tRNA ligase (425 aa).

Residue 230-232 (TAE) participates in L-serine binding. 261–263 (RSE) is a binding site for ATP. Glu-284 is a binding site for L-serine. Position 348–351 (348–351 (EISS)) interacts with ATP. An L-serine-binding site is contributed by Ser-384.

Belongs to the class-II aminoacyl-tRNA synthetase family. Type-1 seryl-tRNA synthetase subfamily. As to quaternary structure, homodimer. The tRNA molecule binds across the dimer.

It is found in the cytoplasm. It catalyses the reaction tRNA(Ser) + L-serine + ATP = L-seryl-tRNA(Ser) + AMP + diphosphate + H(+). The catalysed reaction is tRNA(Sec) + L-serine + ATP = L-seryl-tRNA(Sec) + AMP + diphosphate + H(+). It participates in aminoacyl-tRNA biosynthesis; selenocysteinyl-tRNA(Sec) biosynthesis; L-seryl-tRNA(Sec) from L-serine and tRNA(Sec): step 1/1. Its function is as follows. Catalyzes the attachment of serine to tRNA(Ser). Is also able to aminoacylate tRNA(Sec) with serine, to form the misacylated tRNA L-seryl-tRNA(Sec), which will be further converted into selenocysteinyl-tRNA(Sec). This chain is Serine--tRNA ligase, found in Streptococcus pyogenes serotype M1.